A 608-amino-acid chain; its full sequence is Glutamyl-tRNA(Gln) amidotransferase subunit E (608 aa).

The protein belongs to the GatB/GatE family. GatE subfamily. In terms of assembly, heterodimer of GatD and GatE.

The enzyme catalyses L-glutamyl-tRNA(Gln) + L-glutamine + ATP + H2O = L-glutaminyl-tRNA(Gln) + L-glutamate + ADP + phosphate + H(+). Allows the formation of correctly charged Gln-tRNA(Gln) through the transamidation of misacylated Glu-tRNA(Gln) in organisms which lack glutaminyl-tRNA synthetase. The reaction takes place in the presence of glutamine and ATP through an activated gamma-phospho-Glu-tRNA(Gln). The GatDE system is specific for glutamate and does not act on aspartate. This is Glutamyl-tRNA(Gln) amidotransferase subunit E from Pyrobaculum aerophilum (strain ATCC 51768 / DSM 7523 / JCM 9630 / CIP 104966 / NBRC 100827 / IM2).